The following is a 1893-amino-acid chain: MILKSFLLGNLVSLCMKIINSVVVVGLYYGFLTTFSIGPSYLFLLRAQVMEEGEEGTEKKVSAITGFITGQLMMFISIYYAPLHLALGRPHTITVLALPYLLFHFFWNNHKHFFDYGSTTRNSMRNLSIQCVFLNNLIFQLLNHFILPSSMLARLVNIYMFRCNNKMLFVTSSFVGWLIGHILFMKWVGLVLVWIRQNPSIRSNVLIRSNKYLVSELRNSMARIFSILLFITCVYYLGRIPSPILTKKMKETSETEERGESEEETDVEIERTSETKGTKQEQERSTEEDPSPSLFSEEKEDPDKIDETEEIRVNGKEKTKDEFHFKETCYKNSPVYETSYLDGNQENSKLEILKEDEDNKNKKWFEKPLVTLLFDYKRWNRPLRYIKARFQIKKAVRNEMSQYFFYTCLSDGKQRISFTYPPSLSIFLEMIQRKMSLSTTERLSYDELYNHWIYTNEQKENTLRKEFITRIEALDNGSLTLDVLEKRTRLCNDATKKEYLPKIYDPFLNGPYRGTIKKMFSPSIINETSRENSIEKFRINKIYGILFAIDYREFEHTFDRKSLSTKIGYFLNLINQFTIESPSNLNLKRLSLFPEQGKVDSDSEDQAKFLNFFFDRVITDPKDQTIRKKSIGIKEISKKVPRWSYKLMKNEEEGETLVVYQEIRSRKSKHVVIFTDNQQNADTYTANANKDIDNSEQTNEVALIRYSQQSDFRRDIIKGSMRAQRRKIVIRELFQANVHSPLFLDRIYKPIFFSFDISGLIKLIFENWKEKNKKLKIPNYAEEKTREKRQKAKREEKARIKIAEVWDTVLFAQVIRGCLLLTQSIFRKYIILPSLIIAKNIGRMLLFQSPEWSEDLKDWNREMHVKCTYNGVQLSETEFPQNWLRDGIQIKILFPFCLKPWHKPQERSLDKDSMKDKVKKFCFLTVWGMETDLPFGSPRKRPSFFKPILKELEKRIRKFKNKCFLVLTVLKERTKLFIFLRVSKETKKWVIKSVLFINIKKIIKELLKINPTLLFGLREVYESSETQKQKDSIINNQMIHKSSIQIRSMNWTNYSLTEKKVKDLTDRTSTIRKKIEKIIKDKKKLFLTPEINISPNKASYNAKRLESQKSIWQILKRRNSRLIRKLHYFIKFFIERIYIDILLCLINIPRTNAQFFIESTKKIIDKYVYNNERNQKRIGKPNQKKIHFISIIKRSVSSISNKSSQIFCDLSSLSQAYVFYKLSQTQVINLYKLRSVLQYNGTSLFLKNERKDYFGFGAHEIFHYELRHKKLRNSGMNQWKNWLRGHYQYKYLSPIIWSRLVPQKWRNRVNQHCVAQNQNKDLSKWDLSQKDQLIHYNKQNDYEADSLTNQKENFKKHYRYDLLSYKYINYEDKNDSYIYGSPLQVNNNQDISYNYNTHKRKFFDMLEGIPINNYLGEDDIMYIEYIKKNPDRKYFDWKILHFCFRKKVDIEVWINTSINSNKNTKTGSNNYQIIDKKGLFYLTQDQEIKPSNQKDLFDWMGMNEEILNRSISNLEPWFFPEFVLLYNTYKMKPWVIPIKLLLLNFNGNKNYSKNRNSNRKQKGNLFISSNEKKLLKLENRNQEEKESAGQVDLGSDVQNQGNLESVLSNHEKDIEEDYAGSDSDMQKRTKKKQFKNHTEAELDLFLKRYLLFQLRWDDSLNQKMINNIKVYCLLLRLINPREICISAIQRGEMSLDLIPVHKDLTLTELMKMKRGIFIIEPIRLSVKNDGQFIMYQTIGISLVHKSKYQTNQRYREERYVDNKNCDKFSARCQKMIGNKDKNHYDLLVPENILSPRRRRKFRILICFNLRNRSGVARNPVFCNGNSCNKFLDENKHLDRDKNQLIKLKKLKLFLWPNYRLEDLACMNRYWFDTNNGSCFSMIRIHMYPRLKIR.

6 helical membrane-spanning segments follow: residues 18 to 38, 63 to 83, 87 to 107, 127 to 147, 175 to 195, and 224 to 244; these read IINSVVVVGLYYGFLTTFSIG, AITGFITGQLMMFISIYYAPL, LGRPHTITVLALPYLLFHFFW, LSIQCVFLNNLIFQLLNHFIL, VGWLIGHILFMKWVGLVLVWI, and IFSILLFITCVYYLGRIPSPI. 2 stretches are compositionally biased toward basic and acidic residues: residues 249-258 and 268-287; these read MKETSETEER and EIERTSETKGTKQEQERSTE. Residues 249 to 317 are disordered; sequence MKETSETEER…TEEIRVNGKE (69 aa). Residues 298–309 are compositionally biased toward acidic residues; it reads EKEDPDKIDETE. The helical transmembrane segment at 1126 to 1146 threads the bilayer; it reads LHYFIKFFIERIYIDILLCLI.

It belongs to the TIC214 family. In terms of assembly, part of the Tic complex.

It localises to the plastid. Its subcellular location is the chloroplast inner membrane. In terms of biological role, involved in protein precursor import into chloroplasts. May be part of an intermediate translocation complex acting as a protein-conducting channel at the inner envelope. This Vitis vinifera (Grape) protein is Protein TIC 214.